The chain runs to 187 residues: Elongation factor P (187 aa).

This sequence belongs to the elongation factor P family.

It localises to the cytoplasm. It participates in protein biosynthesis; polypeptide chain elongation. Functionally, involved in peptide bond synthesis. Stimulates efficient translation and peptide-bond synthesis on native or reconstituted 70S ribosomes in vitro. Probably functions indirectly by altering the affinity of the ribosome for aminoacyl-tRNA, thus increasing their reactivity as acceptors for peptidyl transferase. This chain is Elongation factor P, found in Corynebacterium glutamicum (strain R).